A 2527-amino-acid chain; its full sequence is Leucine-rich repeat serine/threonine-protein kinase 2 (2527 aa).

The segment at 1 to 969 is required for RAB29-mediated activation; sequence MASGACQGCE…RSSRLPSHMR (969 aa). Residues 9–33 are a coiled coil; that stretch reads CEEEEEEEALKKLIVRLNNVQEGKQ. Residues Ser-910, Ser-935, Ser-955, and Ser-973 each carry the phosphoserine modification. The segment at 957–979 is disordered; that stretch reads ESLRSSRLPSHMRQSDSSSSLAS. A compositionally biased stretch (low complexity) spans 961 to 978; the sequence is SSRLPSHMRQSDSSSSLA. 13 LRR repeats span residues 983 to 1004, 1012 to 1033, 1036 to 1057, 1059 to 1080, 1084 to 1105, 1108 to 1129, 1130 to 1150, 1156 to 1171, 1174 to 1196, 1197 to 1218, 1221 to 1245, 1246 to 1267, and 1269 to 1291; these read HITS…SQKC, HLTK…LCET, CLIH…VLKM, RITN…DPAM, SLKQ…LAQV, KLEQ…LSLK, ELKI…DFLE, ESFS…MPAL, SITS…FSLP, HLRS…AHWK, NLRE…HVWS, RVEK…IGCL, and NLTS…MGKL. A Phosphoserine; by autocatalysis modification is found at Ser-1292. A Roc domain is found at 1328 to 1511; that stretch reads KAVPYNRMKL…KTIINESLNF (184 aa). A GTP-binding site is contributed by 1341 to 1348; it reads GNTGSGKT. Residue Ser-1444 is modified to Phosphoserine. The region spanning 1543 to 1740 is the COR domain; the sequence is TEFPVINRKH…RMYWRQGIYL (198 aa). One can recognise a Protein kinase domain in the interval 1879 to 2146; sequence EAPEFLLGDG…LICLMRHILI (268 aa). The ATP site is built by Leu-1885, Asp-1887, Gly-1888, Gly-1891, Val-1893, Ala-1904, Lys-1906, Met-1947, Glu-1948, Ala-1950, Ser-1954, and Arg-1957. Asp-1994 acts as the Proton acceptor in catalysis. ATP-binding residues include His-1998, Leu-2001, Ala-2016, and Asp-2017. 2098–2121 lines the GTP pocket; it reads EYGCAPWPMVEKLITKCLKENPQE. 7 WD repeats span residues 2139-2183, 2188-2228, 2233-2276, 2281-2327, 2333-2377, 2402-2438, and 2443-2497; these read CLMR…SLFD, RYSY…LVIN, TKRH…MIFE, KCKG…FSFS, QKLI…EVWD, KESK…LLLD, and RVIR…SIWD. 2295–2298 is a binding site for GTP; the sequence is DVST.

Belongs to the protein kinase superfamily. TKL Ser/Thr protein kinase family. As to quaternary structure, homodimer. Homotetramer; when activated by GTP-bound RAB29. Interacts with PRKN, PRDX3 and TPCN2. Interacts with VPS35. Interacts (via N-terminus) with RAB29; this interaction is direct and stimulates kinase activity. Interacts (via ROC domain) with SEC16A. Interacts with APP; interaction promotes phosphorylation of 'Thr-743' of APP. Interacts with MAPT. Interacts with RAB8A, RAB10, and RAB12. Interacts (via N-terminus) with RAB32. Interacts with YWHAG; this interaction is dependent on phosphorylation of Ser-910 and either Ser-935 or Ser-1444. Interacts with SFN; this interaction is dependent on phosphorylation of Ser-910 and/or Ser-935. The cofactor is Mg(2+). Autophosphorylated at Ser-1292. Autophosphorylation is stimulated by RAB29. Phosphorylation of Ser-910 and Ser-935 or Ser-1444 facilitates interaction with YWHAG. Phosphorylation of Ser-910 and/or Ser-935 facilitates interaction with SFN. Post-translationally, ubiquitinated by TRIM1; undergoes 'Lys-48'-linked polyubiquitination leading to proteasomal degradation. Expressed in the brain (at protein level). Detected throughout the adult brain. Expressed in deep cerebral cortex layers, superficial cingulate cortex layers, the piriform cortex, hippocampal formation, caudate putamen, substantia nigra, the basolateral and basomedial anterior amygdala nuclei, reticular thalamic nucleus and also in the cerebellar granular cell layer. Highly expressed in the striatum, cortex and olfactory tubercle. Little or no expression in the substantia nigra, where dopaminergic neurons preferentially degenerate in Parkinson disease. Expression is particularly high in brain dopaminoceptive areas. High and strikingly specific expression in striatum and parts of cortex and no signals in dopamine neurons.

The protein resides in the cytoplasmic vesicle. Its subcellular location is the perikaryon. It localises to the cell projection. The protein localises to the axon. It is found in the dendrite. The protein resides in the golgi apparatus membrane. Its subcellular location is the endoplasmic reticulum membrane. It localises to the secretory vesicle. The protein localises to the synaptic vesicle membrane. It is found in the endosome. The protein resides in the lysosome. Its subcellular location is the mitochondrion outer membrane. It localises to the cytoplasm. The protein localises to the cytoskeleton. It is found in the phagosome. It carries out the reaction L-threonyl-[protein] + ATP = O-phospho-L-threonyl-[protein] + ADP + H(+). It catalyses the reaction L-seryl-[protein] + ATP = O-phospho-L-seryl-[protein] + ADP + H(+). The enzyme catalyses GTP + H2O = GDP + phosphate + H(+). With respect to regulation, kinase activity is regulated by the GTPase activity of the ROC domain. GTP-bound LRRK2 kinase activity is stimulated by RAB29. Phosphorylation of RAB10 'Thr-73' is stimulated by RAB29 and RAB32. Inhibited by small molecule inhibitors MLi-2 and LRRK2-IN-1. Serine/threonine-protein kinase which phosphorylates a broad range of proteins involved in multiple processes such as neuronal plasticity, innate immunity, autophagy, and vesicle trafficking. Is a key regulator of RAB GTPases by regulating the GTP/GDP exchange and interaction partners of RABs through phosphorylation. Phosphorylates RAB3A, RAB3B, RAB3C, RAB3D, RAB8A, RAB8B, RAB10, RAB12, RAB29, RAB35, and RAB43. Regulates the RAB3IP-catalyzed GDP/GTP exchange for RAB8A through the phosphorylation of 'Thr-72' on RAB8A. Inhibits the interaction between RAB8A and GDI1 and/or GDI2 by phosphorylating 'Thr-72' on RAB8A. Regulates primary ciliogenesis through phosphorylation of RAB8A and RAB10, which promotes SHH signaling in the brain. Together with RAB29, plays a role in the retrograde trafficking pathway for recycling proteins, such as mannose-6-phosphate receptor (M6PR), between lysosomes and the Golgi apparatus in a retromer-dependent manner. Regulates neuronal process morphology in the intact central nervous system (CNS). Plays an important role in recruiting SEC16A to endoplasmic reticulum exit sites (ERES) and in regulating ER to Golgi vesicle-mediated transport and ERES organization. Positively regulates autophagy through a calcium-dependent activation of the CaMKK/AMPK signaling pathway. The process involves activation of nicotinic acid adenine dinucleotide phosphate (NAADP) receptors, increase in lysosomal pH, and calcium release from lysosomes. Phosphorylates PRDX3. By phosphorylating APP on 'Thr-743', which promotes the production and the nuclear translocation of the APP intracellular domain (AICD), regulates dopaminergic neuron apoptosis. Acts as a positive regulator of innate immunity by mediating phosphorylation of RIPK2 downstream of NOD1 and NOD2, thereby enhancing RIPK2 activation. Independent of its kinase activity, inhibits the proteasomal degradation of MAPT, thus promoting MAPT oligomerization and secretion. In addition, has GTPase activity via its Roc domain which regulates LRKK2 kinase activity. Recruited by RAB29/RAB7L1 to overloaded lysosomes where it phosphorylates and stabilizes RAB8A and RAB10 which promote lysosomal content release and suppress lysosomal enlargement through the EHBP1 and EHBP1L1 effector proteins. This Mus musculus (Mouse) protein is Leucine-rich repeat serine/threonine-protein kinase 2 (Lrrk2).